The following is an 84-amino-acid chain: MTDKIRTLQGRVVSDKMEKSIVVAIERFVKHPIYGKFIKRTTKLHVHDENNECGTGDVVEIRECRPLSKTKSWTLVRVVEKAVL.

The protein belongs to the universal ribosomal protein uS17 family. Part of the 30S ribosomal subunit.

Its function is as follows. One of the primary rRNA binding proteins, it binds specifically to the 5'-end of 16S ribosomal RNA. This is Small ribosomal subunit protein uS17 from Citrobacter koseri (strain ATCC BAA-895 / CDC 4225-83 / SGSC4696).